We begin with the raw amino-acid sequence, 145 residues long: Bacilliredoxin Acid345_1880 (145 aa).

This sequence belongs to the bacilliredoxin family.

This chain is Bacilliredoxin Acid345_1880, found in Koribacter versatilis (strain Ellin345).